Reading from the N-terminus, the 711-residue chain is Ecdysone-inducible protein E75 (711 aa).

The segment at residues 44–120 is a DNA-binding region (nuclear receptor); sequence TVLCRVCGDK…VGMSRDAVRF (77 aa). 2 consecutive NR C4-type zinc fingers follow at residues 47–67 and 84–108; these read CRVC…CEGC and CTKN…LKKC. The 248-residue stretch at 153 to 400 folds into the NR LBD domain; that stretch reads DGPRLLARVV…QQMWVEDEGA (248 aa). Disordered regions lie at residues 405 to 432, 466 to 530, 559 to 602, and 680 to 711; these read SGAD…DCGT, LTVT…DMPV, AMRR…PIRA, and DAPQ…MLPA. 2 stretches are compositionally biased toward basic and acidic residues: residues 511 to 521 and 560 to 572; these read SLEEHSDDRRP and MRRD…EARP. A compositionally biased stretch (pro residues) spans 574–590; sequence RPTPSPQPPHHPHPASP. Composition is skewed to low complexity over residues 591–602 and 682–692; these read AHPAHSPRPIRA and PQPLNLSKKSP. Over residues 693 to 711 the composition is skewed to pro residues; sequence SPSPPPPPPRSYMPPMLPA.

This sequence belongs to the nuclear hormone receptor family. NR1 subfamily.

The protein localises to the nucleus. Orphan receptor possibly involved in the regulation of genes in the ecdysteroid cascade. In Galleria mellonella (Greater wax moth), this protein is Ecdysone-inducible protein E75 (E75).